Consider the following 338-residue polypeptide: Anthranilate phosphoribosyltransferase (338 aa).

Residues glycine 81, 84–85, threonine 89, 91–94, 109–117, and alanine 121 contribute to the 5-phospho-alpha-D-ribose 1-diphosphate site; these read GD, NIST, and KHGNRALSS. Anthranilate is bound at residue glycine 81. Serine 93 is a Mg(2+) binding site. Asparagine 112 provides a ligand contact to anthranilate. An anthranilate-binding site is contributed by arginine 167. Mg(2+)-binding residues include aspartate 225 and glutamate 226.

It belongs to the anthranilate phosphoribosyltransferase family. In terms of assembly, homodimer. Mg(2+) serves as cofactor.

It carries out the reaction N-(5-phospho-beta-D-ribosyl)anthranilate + diphosphate = 5-phospho-alpha-D-ribose 1-diphosphate + anthranilate. It participates in amino-acid biosynthesis; L-tryptophan biosynthesis; L-tryptophan from chorismate: step 2/5. Catalyzes the transfer of the phosphoribosyl group of 5-phosphorylribose-1-pyrophosphate (PRPP) to anthranilate to yield N-(5'-phosphoribosyl)-anthranilate (PRA). This chain is Anthranilate phosphoribosyltransferase, found in Rhizobium etli (strain ATCC 51251 / DSM 11541 / JCM 21823 / NBRC 15573 / CFN 42).